Here is a 460-residue protein sequence, read N- to C-terminus: DL-alanine permease SerP2 (460 aa).

12 helical membrane passes run 26-46 (LIAI…KSIH), 47-67 (LTGP…YILL), 98-118 (FIQW…LIAI), 124-144 (FWLP…LLTL), 160-180 (FGMI…ILIF), 209-229 (FFES…IGMT), 246-266 (QIPI…MSIY), 278-298 (FVTI…NFVV), 344-364 (ALLF…IPAI), 368-388 (FVFI…MTLI), 410-430 (HIFI…LFCF), and 433-453 (TIIP…FTFF).

The protein belongs to the amino acid-polyamine-organocation (APC) superfamily. Amino acid transporter (AAT) (TC 2.A.3.1) family.

It is found in the cell membrane. Its function is as follows. Transports DL-alanine, DL-serine and glycine. The preferred substrate is DL-alanine. L-serine is a low-affinity substrate. The polypeptide is DL-alanine permease SerP2 (Lactococcus lactis subsp. cremoris (strain MG1363)).